Consider the following 190-residue polypeptide: Ras-like GTP-binding protein RhoL (190 aa).

Residue 18 to 25 coordinates GTP; the sequence is GDGMVGKT. The Effector region motif lies at 40 to 48; it reads YIPTVFDNH. GTP is bound by residues 65–69 and 123–126; these read DTAGQ and TKLD. Position 187 is a cysteine methyl ester (Cys-187). Cys-187 carries S-geranylgeranyl cysteine lipidation. The propeptide at 188-190 is removed in mature form; the sequence is KIL.

Belongs to the small GTPase superfamily. Rho family. Highly expressed in the embryonic cephalic mesoderm starting from stage 6 and fading by stage 11. Hemocyte precursor cells.

Its subcellular location is the cell membrane. Essential for the maturation of hemocytes. The polypeptide is Ras-like GTP-binding protein RhoL (RhoL) (Drosophila melanogaster (Fruit fly)).